The sequence spans 218 residues: Small ribosomal subunit protein uS3c (218 aa).

One can recognise a KH type-2 domain in the interval 43–118 (IKNYVQKNTR…KLNIAITRIG (76 aa)).

The protein belongs to the universal ribosomal protein uS3 family. As to quaternary structure, part of the 30S ribosomal subunit.

It localises to the plastid. The protein localises to the chloroplast. This chain is Small ribosomal subunit protein uS3c (rps3), found in Gossypium barbadense (Sea Island cotton).